Here is a 929-residue protein sequence, read N- to C-terminus: Ribonucleoside-diphosphate reductase large chain (929 aa).

An ATP-cone domain is found at 1–92 (MYVKKRDGRQ…VSNLHKQTKK (92 aa)). ATP-binding positions include 5-6 (KR), 11-17 (ERVQFDK), T53, and D57. Positions 202 and 217 each coordinate GDP. C218 and C444 form a disulfide bridge. DTTP is bound by residues 226 to 228 (DSI), K243, R256, and 263 to 264 (AG). A GDP-binding site is contributed by N427. Residue N427 is the Proton acceptor of the active site. C429 acts as the Cysteine radical intermediate in catalysis. Residues E431 and 605 to 608 (TAST) contribute to the GDP site. E431 (proton acceptor) is an active-site residue. Residues 789-904 (ENTSGPRPYA…RDENIYSNAP (116 aa)) form a disordered region. The segment covering 800–809 (TGVSGTSTPI) has biased composition (polar residues). The span at 868-884 (VKTEDIGSPLLERKEGQ) shows a compositional bias: basic and acidic residues. The segment covering 885–894 (NEDVDEDSQE) has biased composition (acidic residues).

Belongs to the ribonucleoside diphosphate reductase large chain family.

The catalysed reaction is a 2'-deoxyribonucleoside 5'-diphosphate + [thioredoxin]-disulfide + H2O = a ribonucleoside 5'-diphosphate + [thioredoxin]-dithiol. Its activity is regulated as follows. Under complex allosteric control mediated by deoxynucleoside triphosphates and ATP binding to separate specificity and activation sites on the large subunit. The type of nucleotide bound at the specificity site determines substrate preference. It seems probable that ATP makes the enzyme reduce CDP and UDP, dGTP favors ADP reduction and dTTP favors GDP reduction. Stimulated by ATP and inhibited by dATP binding to the activity site. Its function is as follows. Provides the precursors necessary for DNA synthesis. Catalyzes the biosynthesis of deoxyribonucleotides from the corresponding ribonucleotides. This is Ribonucleoside-diphosphate reductase large chain (rnr-1) from Neurospora crassa (strain ATCC 24698 / 74-OR23-1A / CBS 708.71 / DSM 1257 / FGSC 987).